Consider the following 130-residue polypeptide: Small ribosomal subunit protein uS9 (130 aa).

Belongs to the universal ribosomal protein uS9 family.

This Janthinobacterium sp. (strain Marseille) (Minibacterium massiliensis) protein is Small ribosomal subunit protein uS9.